Consider the following 679-residue polypeptide: Protein white (679 aa).

A disordered region spans residues 1–34 (MGQEDQEVLIRGGKATSTSAESLNNNNEQPYEQS). The span at 15–34 (ATSTSAESLNNNNEQPYEQS) shows a compositional bias: polar residues. The ABC transporter domain occupies 84-332 (NRVKGVFCNE…FSYIGATCPT (249 aa)). 121-128 (GSSGAGKT) is an ATP binding site. Helical transmembrane passes span 427–445 (LLQT…LGQQ), 457–477 (AIFL…ITVF), 507–525 (LPLF…YPLI), 534–555 (FFTA…GYLI), and 568–586 (VGPP…FLNS). 2 N-linked (GlcNAc...) asparagine glycosylation sites follow: Asn628 and Asn643. The chain crosses the membrane as a helical span at residues 651–670 (FDFIGLALLIVGFRISAYIA).

It belongs to the ABC transporter superfamily. ABCG family. Eye pigment precursor importer (TC 3.A.1.204) subfamily.

It is found in the membrane. Functionally, may be part of a membrane-spanning permease system necessary for the transport of pigment precursors into pigment cells responsible for eye color. The sequence is that of Protein white (W) from Ceratitis capitata (Mediterranean fruit fly).